Reading from the N-terminus, the 388-residue chain is bZIP transcription factor ABI5 homolog (388 aa).

Residues 1 to 36 form a disordered region; that stretch reads MASEMSKNVKVTDDQEVTSQERDQSGGTKVGGEEEI. Ser44 carries the post-translational modification Phosphoserine. The 64-residue stretch at 302–365 folds into the bZIP domain; the sequence is VERRQRRMIK…KQMLVEKMME (64 aa). A basic motif region spans residues 304-323; that stretch reads RRQRRMIKNRESAARSRARK. Residues 330–344 are leucine-zipper; the sequence is LEAELNYLKQENARL. Residues 368–388 are disordered; that stretch reads KEKMNANRGGSQLRRSGSCMW.

This sequence belongs to the bZIP family. ABI5 subfamily. As to quaternary structure, forms homodimers. Interacts with VP1. Interacts with GF14D. Interacts with PP2C51. Interacts with SAPK2. Phosphorylated at Ser-44 by SAPK6. In terms of tissue distribution, expressed in roots, leaves and panicles. Expressed in seeds.

The protein resides in the nucleus. Its function is as follows. Transcription factor that possesses transactivation activity in yeast. Involved in abscisic acid (ABA) signaling pathway. Binds to the G-box motif 5'-CACGTG-3' of TRAB1 gene promoter. Involved in the regulation of pollen maturation. May act as negative regulator of salt stress response. Together with PYL5, PP2C30 and SAPK2, is part of an ABA signaling unit that modulates seed germination and early seedling growth. The polypeptide is bZIP transcription factor ABI5 homolog (Oryza sativa subsp. japonica (Rice)).